The sequence spans 226 residues: 7-cyano-7-deazaguanine synthase (226 aa).

An ATP-binding site is contributed by 7–17 (LSGGMDSLVTT). Positions 187, 195, 198, and 201 each coordinate Zn(2+).

Belongs to the QueC family. The cofactor is Zn(2+).

The enzyme catalyses 7-carboxy-7-deazaguanine + NH4(+) + ATP = 7-cyano-7-deazaguanine + ADP + phosphate + H2O + H(+). It participates in purine metabolism; 7-cyano-7-deazaguanine biosynthesis. In terms of biological role, catalyzes the ATP-dependent conversion of 7-carboxy-7-deazaguanine (CDG) to 7-cyano-7-deazaguanine (preQ(0)). The protein is 7-cyano-7-deazaguanine synthase of Chlorobium phaeobacteroides (strain DSM 266 / SMG 266 / 2430).